A 517-amino-acid polypeptide reads, in one-letter code: ATP synthase subunit alpha (517 aa).

174-181 serves as a coordination point for ATP; the sequence is GDRQTGKT.

This sequence belongs to the ATPase alpha/beta chains family. F-type ATPases have 2 components, CF(1) - the catalytic core - and CF(0) - the membrane proton channel. CF(1) has five subunits: alpha(3), beta(3), gamma(1), delta(1), epsilon(1). CF(0) has three main subunits: a(1), b(2) and c(9-12). The alpha and beta chains form an alternating ring which encloses part of the gamma chain. CF(1) is attached to CF(0) by a central stalk formed by the gamma and epsilon chains, while a peripheral stalk is formed by the delta and b chains.

It is found in the cell inner membrane. The enzyme catalyses ATP + H2O + 4 H(+)(in) = ADP + phosphate + 5 H(+)(out). Its function is as follows. Produces ATP from ADP in the presence of a proton gradient across the membrane. The alpha chain is a regulatory subunit. This chain is ATP synthase subunit alpha, found in Variovorax paradoxus (strain S110).